A 203-amino-acid polypeptide reads, in one-letter code: GTP cyclohydrolase-2 (203 aa).

Position 49 to 53 (49 to 53 (RIHSE)) interacts with GTP. Zn(2+) contacts are provided by cysteine 54, cysteine 65, and cysteine 67. Residues glutamine 70, 92–94 (EGR), and threonine 114 each bind GTP. The active-site Proton acceptor is the aspartate 126. Arginine 128 (nucleophile) is an active-site residue. GTP contacts are provided by threonine 149 and lysine 154.

Belongs to the GTP cyclohydrolase II family. Requires Zn(2+) as cofactor.

The catalysed reaction is GTP + 4 H2O = 2,5-diamino-6-hydroxy-4-(5-phosphoribosylamino)-pyrimidine + formate + 2 phosphate + 3 H(+). Its pathway is cofactor biosynthesis; riboflavin biosynthesis; 5-amino-6-(D-ribitylamino)uracil from GTP: step 1/4. Catalyzes the conversion of GTP to 2,5-diamino-6-ribosylamino-4(3H)-pyrimidinone 5'-phosphate (DARP), formate and pyrophosphate. The chain is GTP cyclohydrolase-2 from Shewanella sp. (strain W3-18-1).